The primary structure comprises 253 residues: Probable transcriptional regulatory protein TM_0466 (253 aa).

The protein belongs to the TACO1 family.

The protein localises to the cytoplasm. The chain is Probable transcriptional regulatory protein TM_0466 from Thermotoga maritima (strain ATCC 43589 / DSM 3109 / JCM 10099 / NBRC 100826 / MSB8).